The sequence spans 64 residues: Alpha-conotoxin SI (64 aa).

A signal peptide spans 1 to 21; it reads MGMRMMFTVFLLVVLATTVVS. Residues 22-49 constitute a propeptide that is removed on maturation; sequence FPSDRASDGRDDEAKDERSDMHESDRKE. The disordered stretch occupies residues 23 to 47; that stretch reads PSDRASDGRDDEAKDERSDMHESDR. Over residues 26–47 the composition is skewed to basic and acidic residues; the sequence is RASDGRDDEAKDERSDMHESDR. Cystine bridges form between cysteine 51–cysteine 56 and cysteine 52–cysteine 62. Cysteine 62 bears the Cysteine amide mark.

The protein belongs to the conotoxin A superfamily. Expressed by the venom duct.

It localises to the secreted. Its function is as follows. Alpha-conotoxins act on postsynaptic membranes, they bind to the nicotinic acetylcholine receptors (nAChR) and thus inhibit them. Is active on muscle nAChR (IC(50)=113 nM on adult subtype (alpha-1-beta-1-gamma-delta/CHRNA1-CHRNB1-CHRNG-CHRND) and IC(50)=142 nM on fetal subtype (alpha-1-beta-1-delta-epsilon/CHRNA1-CHRNB1-CHRND-CHRNE)). On mice muscle receptors, its higher affinity site is the alpha/delta nAChR subunit interface. On Torpedo receptors, it does not distinguish between alpha/delta and alpha/gamma acetylcholine-binding sites. In vivo, causes paralysis followed by death when injected into goldfish. In contrast, has no effect on mice, when similar doses are intraperitoneally or intracerebrally injected. The sequence is that of Alpha-conotoxin SI from Conus striatus (Striated cone).